The chain runs to 183 residues: ATP synthase subunit delta (183 aa).

Belongs to the ATPase delta chain family. In terms of assembly, F-type ATPases have 2 components, F(1) - the catalytic core - and F(0) - the membrane proton channel. F(1) has five subunits: alpha(3), beta(3), gamma(1), delta(1), epsilon(1). F(0) has three main subunits: a(1), b(2) and c(10-14). The alpha and beta chains form an alternating ring which encloses part of the gamma chain. F(1) is attached to F(0) by a central stalk formed by the gamma and epsilon chains, while a peripheral stalk is formed by the delta and b chains.

The protein resides in the cell inner membrane. In terms of biological role, f(1)F(0) ATP synthase produces ATP from ADP in the presence of a proton or sodium gradient. F-type ATPases consist of two structural domains, F(1) containing the extramembraneous catalytic core and F(0) containing the membrane proton channel, linked together by a central stalk and a peripheral stalk. During catalysis, ATP synthesis in the catalytic domain of F(1) is coupled via a rotary mechanism of the central stalk subunits to proton translocation. Its function is as follows. This protein is part of the stalk that links CF(0) to CF(1). It either transmits conformational changes from CF(0) to CF(1) or is implicated in proton conduction. The polypeptide is ATP synthase subunit delta (Thermosipho africanus (strain TCF52B)).